A 200-amino-acid polypeptide reads, in one-letter code: Ribonuclease HII (200 aa).

The region spanning Glu-14–Asp-200 is the RNase H type-2 domain. Positions 20, 21, and 112 each coordinate a divalent metal cation.

This sequence belongs to the RNase HII family. Mn(2+) serves as cofactor. Mg(2+) is required as a cofactor.

The protein localises to the cytoplasm. It carries out the reaction Endonucleolytic cleavage to 5'-phosphomonoester.. Endonuclease that specifically degrades the RNA of RNA-DNA hybrids. In Salinibacter ruber (strain DSM 13855 / M31), this protein is Ribonuclease HII.